The sequence spans 272 residues: Large ribosomal subunit protein uL3 (272 aa).

A disordered region spans residues 125–146 (QHIGPKSHGGGGGSQPLRQTGS).

It belongs to the universal ribosomal protein uL3 family. In terms of assembly, part of the 50S ribosomal subunit. Forms a cluster with proteins L14 and L19.

In terms of biological role, one of the primary rRNA binding proteins, it binds directly near the 3'-end of the 23S rRNA, where it nucleates assembly of the 50S subunit. The protein is Large ribosomal subunit protein uL3 of Metamycoplasma arthritidis (strain 158L3-1) (Mycoplasma arthritidis).